The chain runs to 127 residues: Acetylcholine receptor subunit alpha (127 aa).

The Extracellular segment spans residues 1–127; the sequence is ADGIFAIDQF…YFIVNVIIPC (127 aa). Cysteine 33 and cysteine 47 are disulfide-bonded. N-linked (GlcNAc...) asparagine glycosylation is found at asparagine 46 and asparagine 94. Cysteine 97 and cysteine 98 are oxidised to a cystine.

The protein belongs to the ligand-gated ion channel (TC 1.A.9) family. Acetylcholine receptor (TC 1.A.9.1) subfamily. Alpha-1/CHRNA1 sub-subfamily. In terms of assembly, one of the alpha chains that assemble within the acetylcholine receptor, a pentamer of two alpha chains, a beta, a delta, and a gamma or epsilon chains.

Its subcellular location is the postsynaptic cell membrane. The protein localises to the cell membrane. The catalysed reaction is K(+)(in) = K(+)(out). The enzyme catalyses Na(+)(in) = Na(+)(out). In terms of biological role, upon acetylcholine binding, the AChR responds by an extensive change in conformation that affects all subunits and leads to opening of an ion-conducting channel across the plasma membrane. Does not bind alpha-bungarotoxin. The chain is Acetylcholine receptor subunit alpha (CHRNA1) from Natrix tessellata (Dice snake).